The primary structure comprises 343 residues: Probable dual-specificity RNA methyltransferase RlmN (343 aa).

Glu-91 (proton acceptor) is an active-site residue. One can recognise a Radical SAM core domain in the interval 97 to 326 (HPDRITACIS…AEIRREKGAD (230 aa)). A disulfide bond links Cys-104 and Cys-331. [4Fe-4S] cluster-binding residues include Cys-111, Cys-115, and Cys-118. S-adenosyl-L-methionine contacts are provided by residues 158–159 (GE), Ser-190, 213–215 (SLH), and Asn-289. Cys-331 serves as the catalytic S-methylcysteine intermediate.

This sequence belongs to the radical SAM superfamily. RlmN family. The cofactor is [4Fe-4S] cluster.

The protein localises to the cytoplasm. The catalysed reaction is adenosine(2503) in 23S rRNA + 2 reduced [2Fe-2S]-[ferredoxin] + 2 S-adenosyl-L-methionine = 2-methyladenosine(2503) in 23S rRNA + 5'-deoxyadenosine + L-methionine + 2 oxidized [2Fe-2S]-[ferredoxin] + S-adenosyl-L-homocysteine. It catalyses the reaction adenosine(37) in tRNA + 2 reduced [2Fe-2S]-[ferredoxin] + 2 S-adenosyl-L-methionine = 2-methyladenosine(37) in tRNA + 5'-deoxyadenosine + L-methionine + 2 oxidized [2Fe-2S]-[ferredoxin] + S-adenosyl-L-homocysteine. Specifically methylates position 2 of adenine 2503 in 23S rRNA and position 2 of adenine 37 in tRNAs. This chain is Probable dual-specificity RNA methyltransferase RlmN, found in Thermotoga petrophila (strain ATCC BAA-488 / DSM 13995 / JCM 10881 / RKU-1).